A 407-amino-acid chain; its full sequence is O-antigen polymerase (407 aa).

11 helical membrane passes run 2 to 22, 31 to 51, 63 to 83, 101 to 121, 141 to 161, 168 to 185, 190 to 204, 211 to 231, 319 to 339, 356 to 376, and 382 to 402; these read LIISYIALCLLFIVYLYTLSV, VMVPYLIITVPTLYVFEGIFV, YLFFYTCYITYIASFVISYLY, YVFTSLLFTFLAFIIYLPVLM, YGIYFYPSLMFSLVASICAFF, LFCISIVLFNCILIFLHG, IFSIFIAFILYLSYI, FMFLVKSFAVIAVIVTAFFAY, ADFGLFTPVWLVISGVFKGVL, FIMFLFCIGISVIPVSMGWLF, and IAFMVYIASSFVFSEHIRFVL.

The protein localises to the cell inner membrane. The catalysed reaction is n lipid-linked O-antigen repeat units = a lipid-linked O antigen + (n-1) polyisoprenyl diphosphate.. It functions in the pathway bacterial outer membrane biogenesis; LPS O-antigen biosynthesis. Functionally, polymerase involved in the biosynthesis of the lipopolysaccharide (LPS). Catalyzes the polymerization of the O-antigen repeat units on the periplasmic face of the inner membrane, leading to the formation of the lipid-linked O-antigen molecule. This Salmonella typhi protein is O-antigen polymerase (rfc).